The sequence spans 109 residues: Hainantoxin-XVIII-7 (109 aa).

The first 18 residues, 1-18 (MKLSIIIIATSLVIAVVA), serve as a signal peptide directing secretion. Residues 19–46 (FPSKDSKAIENDKTEQRMEIVVQETARA) constitute a propeptide that is removed on maturation. 4 disulfides stabilise this stretch: Cys47–Cys62, Cys55–Cys68, Cys59–Cys108, and Cys61–Cys81.

It belongs to the neurotoxin 25 family. F7 subfamily. In terms of tissue distribution, expressed by the venom gland.

It is found in the secreted. Functionally, putative ion channel inhibitor. The polypeptide is Hainantoxin-XVIII-7 (Cyriopagopus hainanus (Chinese bird spider)).